We begin with the raw amino-acid sequence, 328 residues long: MAKPAKRVAVTGAAGQIAYSLLFRIANGDLLGKDQPVILQLLDLPQAQAAVKGVVMELDDCAFPLLAGVVITDDPKVAFKDADVALLVGARPRSKGMERKDLLSANAEIFTVQGAALNEVASRDVKVLVVGNPANTNAYIAMKSAPDLPKKNFTAMLRLDHNRALSQLAAKSGKPVASIEKLAVWGNHSPTMYPDFRFATAEGESLLKLINDDEWNRNTFIPTVGKRGAAIIEARGLSSAASAANAAIDHVRDWVLGTNGKWVTMGIPSDGSYGIPEDIIYGVPVTCENGEYKRVEGLEIDAFSREKMDATLAELLEERDGVAHLLKN.

12 to 18 (GAAGQIA) provides a ligand contact to NAD(+). Substrate-binding residues include Arg93 and Arg99. Residues Asn106, Gln113, and 130–132 (VGN) each bind NAD(+). The substrate site is built by Asn132 and Arg163. The Proton acceptor role is filled by His188.

This sequence belongs to the LDH/MDH superfamily. MDH type 2 family.

It catalyses the reaction (S)-malate + NAD(+) = oxaloacetate + NADH + H(+). Catalyzes the reversible oxidation of malate to oxaloacetate. The protein is Malate dehydrogenase of Burkholderia multivorans (strain ATCC 17616 / 249).